Here is a 601-residue protein sequence, read N- to C-terminus: Putative purine permease C1399.01c (601 aa).

12 helical membrane passes run 64 to 84 (VPVLLALLLGFQHALAMVGGV), 102 to 122 (TNYLVSAGLISSGIMTLIQIA), 131 to 151 (YYIGTGMLSVLGISFTSVSVA), 179 to 199 (YGAFLATACVCSLLEIFMSFI), 207 to 227 (LFPPIVTGPVVLLIGTSLISS), 264 to 284 (GWGSAQFIGLGFSVFATIIII), 294 to 314 (TTSVVLGLVVGMIISAATGYW), 337 to 357 (IYGPAVLPMLALYIVNMMEAI), 424 to 444 (FFCAVILFFMGLFAKFAAVFV), 450 to 470 (VLGGMTTFLFSSVAVSGIAII), 481 to 501 (FILTASMTLGMGAILVPDWFT), and 522 to 542 (LVMENGFAIGAFISIFLNLIL).

It belongs to the nucleobase:cation symporter-2 (NCS2) (TC 2.A.40) family.

It localises to the vacuole membrane. This is Putative purine permease C1399.01c from Schizosaccharomyces pombe (strain 972 / ATCC 24843) (Fission yeast).